The following is a 161-amino-acid chain: Nuclear transcription factor Y subunit B-3 (161 aa).

Residues 1–23 (MADSDNDSGGHKDGGNASTREQD) are disordered. Ala-2 is modified (N-acetylalanine). A compositionally biased stretch (basic and acidic residues) spans 8-23 (SGGHKDGGNASTREQD). Residues 26 to 32 (LPIANVS) mediate DNA binding. Positions 53-64 (VQECVSEFISFI) are subunit association domain (SAD). Positions 114-146 (EKTTTAGRQGDKEGGGGGGGAGSGSGGAPMYGG) are disordered. The segment covering 128 to 146 (GGGGGGAGSGSGGAPMYGG) has biased composition (gly residues).

This sequence belongs to the NFYB/HAP3 subunit family. In terms of assembly, heterotrimeric transcription factor composed of three components, NF-YA, NF-YB and NF-YC. NF-YB and NF-YC must interact and dimerize for NF-YA association and DNA binding. Component of a heat stress-inducible transcriptional complex with NF-YA and NF-YB subunits made, at least, of NFYA2, NFYB3 and DPB3-1 in cooperation with DREB2A. Binds directly with DPB3-1. In terms of tissue distribution, ubiquitous. Expressed in seedlings, petioles, hypocotyls, reproductive organ tissues and leaves.

Its subcellular location is the nucleus. It localises to the cytoplasm. The protein resides in the cytosol. Component of the NF-Y/HAP transcription factor complex. The NF-Y complex stimulates the transcription of various genes by recognizing and binding to a CCAAT motif in promoters. Promotes the expression of heat stress-inducible genes by contributing to the formation of a heat stress-specific transcriptional complex with NF-Y subunits (e.g. DPB3-1, NF-YA2 and NF-YB3) and DREB2A at the promoter of target genes, thus promoting heat tolerance. In Arabidopsis thaliana (Mouse-ear cress), this protein is Nuclear transcription factor Y subunit B-3.